Here is a 617-residue protein sequence, read N- to C-terminus: uncharacterized protein (617 aa).

Low complexity-rich tracts occupy residues 1 to 16 and 36 to 45; these read MSKC…SNSS and STTSSNGSNS. The interval 1-49 is disordered; that stretch reads MSKCATPTPSTSSNSSDEAKRSPQPMSRGFPQRNMSTTSSNGSNSPRHR. The next 3 membrane-spanning stretches (helical) occupy residues 219–239, 262–282, and 427–447; these read LMIG…GGLA, TAGA…FTGY, and PITL…LLTM.

This sequence belongs to the TMCO4 family.

It localises to the membrane. This is an uncharacterized protein from Caenorhabditis elegans.